We begin with the raw amino-acid sequence, 75 residues long: Putative UPF0377 protein YAL067W-A (75 aa).

Belongs to the UPF0377 family.

In Saccharomyces cerevisiae (strain ATCC 204508 / S288c) (Baker's yeast), this protein is Putative UPF0377 protein YAL067W-A.